The chain runs to 492 residues: KRAB-A domain-containing protein 2 (492 aa).

The KRAB domain maps to 36–117; sequence LFQEATAFEN…MREKFLMSVT (82 aa). Phosphoserine is present on Ser-115. Position 117 is a phosphothreonine (Thr-117). Residues 247 to 415 form the Integrase catalytic domain; the sequence is RGLAPKPMTF…SPFEAMFGYK (169 aa). Residues 427–457 are a coiled coil; sequence RETVATLQTEEELEIAEEQLENSLWIRQEER. Over residues 455-465 the composition is skewed to basic and acidic residues; that stretch reads EERAEIGADRS. The tract at residues 455–492 is disordered; sequence EERAEIGADRSDMDDDMDPTPEASEPSTSQGTSGLLCW. Residues 479–492 are compositionally biased toward polar residues; the sequence is EPSTSQGTSGLLCW.

The polypeptide is KRAB-A domain-containing protein 2 (KRBA2) (Homo sapiens (Human)).